The sequence spans 273 residues: Large ribosomal subunit protein uL2c (273 aa).

The interval 223–273 (MNPVDHPHGGGEGRAPIGRKKPTTPWGYPALGRRSRKRNKYSDSFILRRRK) is disordered.

Belongs to the universal ribosomal protein uL2 family. Part of the 50S ribosomal subunit.

The protein localises to the plastid. Its subcellular location is the chloroplast. This chain is Large ribosomal subunit protein uL2c (rpl2), found in Calycanthus floridus var. glaucus (Eastern sweetshrub).